The sequence spans 739 residues: Phosphoribosylformylglycinamidine synthase subunit PurL (739 aa).

His-54 is a catalytic residue. Tyr-57 and Lys-96 together coordinate ATP. Glu-98 provides a ligand contact to Mg(2+). Substrate is bound by residues 99–102 (SHNH) and Arg-121. The Proton acceptor role is filled by His-100. Asp-122 serves as a coordination point for Mg(2+). A substrate-binding site is contributed by Gln-245. A Mg(2+)-binding site is contributed by Asp-273. Residue 317 to 319 (ESQ) coordinates substrate. Residues Asp-500 and Gly-537 each contribute to the ATP site. Asn-538 contacts Mg(2+). Ser-540 serves as a coordination point for substrate.

It belongs to the FGAMS family. As to quaternary structure, monomer. Part of the FGAM synthase complex composed of 1 PurL, 1 PurQ and 2 PurS subunits.

The protein resides in the cytoplasm. It carries out the reaction N(2)-formyl-N(1)-(5-phospho-beta-D-ribosyl)glycinamide + L-glutamine + ATP + H2O = 2-formamido-N(1)-(5-O-phospho-beta-D-ribosyl)acetamidine + L-glutamate + ADP + phosphate + H(+). Its pathway is purine metabolism; IMP biosynthesis via de novo pathway; 5-amino-1-(5-phospho-D-ribosyl)imidazole from N(2)-formyl-N(1)-(5-phospho-D-ribosyl)glycinamide: step 1/2. Its function is as follows. Part of the phosphoribosylformylglycinamidine synthase complex involved in the purines biosynthetic pathway. Catalyzes the ATP-dependent conversion of formylglycinamide ribonucleotide (FGAR) and glutamine to yield formylglycinamidine ribonucleotide (FGAM) and glutamate. The FGAM synthase complex is composed of three subunits. PurQ produces an ammonia molecule by converting glutamine to glutamate. PurL transfers the ammonia molecule to FGAR to form FGAM in an ATP-dependent manner. PurS interacts with PurQ and PurL and is thought to assist in the transfer of the ammonia molecule from PurQ to PurL. This chain is Phosphoribosylformylglycinamidine synthase subunit PurL, found in Bacillus cereus (strain B4264).